We begin with the raw amino-acid sequence, 1058 residues long: SIT4-associating protein SAP185 (1058 aa).

K20 participates in a covalent cross-link: Glycyl lysine isopeptide (Lys-Gly) (interchain with G-Cter in ubiquitin). Disordered stretches follow at residues 34–71, 135–202, 513–556, 818–862, 873–892, and 934–992; these read TSTE…NREE, SEDR…ELEE, NSQN…TSID, CQEE…DQEQ, TKTR…VPGE, and ELSD…HDYD. Polar residues predominate over residues 42 to 55; it reads DSNSTDESLESNSF. 2 stretches are compositionally biased toward basic and acidic residues: residues 135–146 and 153–175; these read SEDRDLVRGEDK and ENAK…TRSG. Over residues 176–189 the composition is skewed to acidic residues; the sequence is EEEELENEENDSAS. The segment covering 190–202 has biased composition (basic and acidic residues); sequence EDTRVTLPHELEE. 2 stretches are compositionally biased toward acidic residues: residues 528 to 546 and 820 to 837; these read ENED…DDTN and EEEE…EDEP. Residues 838 to 861 are compositionally biased toward basic and acidic residues; sequence QEYRNGDSVRSKESNSSEGKRDQE. The segment covering 934 to 963 has biased composition (polar residues); the sequence is ELSDGWESSPSNSIPKRASPSKNGMNSPMF. A compositionally biased stretch (basic and acidic residues) spans 967–991; that stretch reads FELHSPTDEFGGHKDEILSAEGHDY.

This sequence belongs to the SAPS family. Hyperphosphorylated in the absence of SIT4.

In terms of biological role, associates with the SIT4 phosphatase in a cell cycle dependent manner. May be directly or indirectly involved in SIT4-dependent functions in budding and in normal G1 cyclin expression. This is SIT4-associating protein SAP185 (SAP185) from Saccharomyces cerevisiae (strain ATCC 204508 / S288c) (Baker's yeast).